Here is a 143-residue protein sequence, read N- to C-terminus: MRTTYMAKPHEVERKWYTIDATNKPLGRLASEIAEILRGKHKPTFTPHVDTGDYVIVLNAEKVLLTGKKRTQKHHYRHSGYPGGLKAINYETLLNTKPEKAIELAVKGMLPKNRLGRKMIKKLKVYAGDEHPHQAQQPEPWEG.

Belongs to the universal ribosomal protein uL13 family. Part of the 50S ribosomal subunit.

Its function is as follows. This protein is one of the early assembly proteins of the 50S ribosomal subunit, although it is not seen to bind rRNA by itself. It is important during the early stages of 50S assembly. This chain is Large ribosomal subunit protein uL13, found in Natranaerobius thermophilus (strain ATCC BAA-1301 / DSM 18059 / JW/NM-WN-LF).